We begin with the raw amino-acid sequence, 49 residues long: MTRSLKKNPFVAKHLLRKIEKLNTKAEKQIIITWSRAITGERRELNPRW.

This sequence belongs to the universal ribosomal protein uS19 family.

The protein resides in the plastid. Its subcellular location is the chloroplast. Its function is as follows. Protein S19 forms a complex with S13 that binds strongly to the 16S ribosomal RNA. The protein is Small ribosomal subunit protein uS19c (rps19) of Sinapis alba (White mustard).